The following is a 341-amino-acid chain: Mitochondrial dimethyladenosine transferase 1 (341 aa).

The transit peptide at M1 to L27 directs the protein to the mitochondrion. 7 residues coordinate S-adenosyl-L-methionine: L38, G63, E85, K86, D111, V112, and N141.

Belongs to the class I-like SAM-binding methyltransferase superfamily. rRNA adenine N(6)-methyltransferase family. KsgA subfamily. In terms of assembly, interacts with mitochondrial RNA polymerase POLRMT. Interacts with TFAM. Bound to the maturing mtSSU until the late stages of assembly.

Its subcellular location is the mitochondrion. The catalysed reaction is adenosine(N)/adenosine(N+1) in rRNA + 4 S-adenosyl-L-methionine = N(6)-dimethyladenosine(N)/N(6)-dimethyladenosine(N+1) in rRNA + 4 S-adenosyl-L-homocysteine + 4 H(+). In terms of biological role, mitochondrial methyltransferase which uses S-adenosyl methionine to dimethylate two highly conserved adjacent adenosine residues (A1583 and A1584) within the loop of helix 45 at the 3-prime end of 12S rRNA, thereby regulating the assembly or stability of the small subunit of the mitochondrial ribosome. Also required for basal transcription of mitochondrial DNA, probably via its interaction with POLRMT and TFAM. Stimulates transcription independently of the methyltransferase activity. This is Mitochondrial dimethyladenosine transferase 1 (TFB1M) from Bos taurus (Bovine).